A 313-amino-acid chain; its full sequence is WD repeat-containing protein 82 (313 aa).

6 WD repeats span residues 19–58 (ENSD…PKRT), 105–144 (GHSK…CQGL), 146–184 (HLQG…KGPF), 192–231 (DRTC…VMHT), 236–276 (ANSK…KVAV), and 280–313 (KHTG…TIDD).

This sequence belongs to the WD repeat SWD2 family. In terms of assembly, component of the SET1/COMPASS complex, at least composed of the catalytic subunit (SETD1A or SETD1B), WDR5, WDR82, RBBP5, ASH2L/ASH2, CXXC1/CFP1, HCFC1 and DPY30. Component of the PNUTS-PP1 phosphatase complex, composed of PPP1R10/PNUTS, TOX4, WDR82, and PPP1CA or PPP1CB or PPP1CC. Associated with multiple protein complexes including an RNA polymerase II complex, MLL3/MLL4 complex and a chaperonin-containing TCP1 complex. Interacts with SETD1B (via N-terminal region); the interaction is direct. Interacts with SETD1A (via N-terminal region); the interaction is direct. Interacts with CUL4B. Interacts with RBBP5. Interacts with POLR2B. Interacts with hyperphosphorylated C-terminal domain (CTD) of RNA polymerase II large subunit (POLR2A). Binds specifically to CTD heptad repeats phosphorylated on 'Ser-5' of each heptad. SETD1A enhances its interaction with POLR2A. Interacts with PPP1R10/PNUTS. Interacts with PPP1CA in the presence of PPP1R10/PNUTS. Interacts with ZC3H4; interaction is independent of the SET1 complex and promotes transcription termination of long non-coding RNAs (lncRNAs).

The protein resides in the nucleus. It is found in the chromosome. It localises to the cytoplasm. Functionally, regulatory component of the SET1/COMPASS complex implicated in the tethering of this complex to transcriptional start sites of active genes. Facilitates histone H3 'Lys-4' methylation (H3K4me) via recruitment of the SETD1A or SETD1B to the 'Ser-5' phosphorylated C-terminal domain (CTD) of RNA polymerase II large subunit (POLR2A). Component of the PNUTS-PP1 protein phosphatase complex, a protein phosphatase 1 (PP1) complex that promotes RNA polymerase II transcription pause-release, allowing transcription elongation. PNUTS-PP1 also plays a role in the control of chromatin structure and cell cycle progression during the transition from mitosis into interphase. Together with ZC3H4, but independently of the SET1 complex, part of a transcription termination checkpoint that promotes transcription termination of long non-coding RNAs (lncRNAs). The transcription termination checkpoint is activated by the inefficiently spliced first exon of lncRNAs and promotes transcription termination of lncRNAs and their subsequent degradation by the exosome. This is WD repeat-containing protein 82 from Homo sapiens (Human).